The sequence spans 205 residues: CASP-like protein 0U1 (205 aa).

Residues 1–38 (MDDAPGASDEAREPLLKRVGASVEGTSLMNHRLMKNPK) lie on the Cytoplasmic side of the membrane. The helical transmembrane segment at 39–57 (FRALLVESLMALTTFSFMA) threads the bilayer. Topologically, residues 58–89 (KQTEGLAGPELSTLNDCGEAGCGFTKFYQFKG) are extracellular. A helical membrane pass occupies residues 90 to 110 (VVGVYAGFWAYTVILIAMYVI). The Cytoplasmic portion of the chain corresponds to 111 to 124 (RKAPPPGTEFASYA). A helical membrane pass occupies residues 125-145 (LFTAAMATFVVMSITECASVV). The Extracellular segment spans residues 146–159 (LSSDYYVCKNADYS). The helical transmembrane segment at 160–180 (LVSLIFAAATIVLNCLTCAFA) threads the bilayer. Over 181–205 (WRQWGELKFVGLPKTLSALTETYPG) the chain is Cytoplasmic.

It belongs to the Casparian strip membrane proteins (CASP) family. In terms of assembly, homodimer and heterodimers.

The protein localises to the cell membrane. The protein is CASP-like protein 0U1 of Ostreococcus lucimarinus (strain CCE9901).